The sequence spans 92 residues: Small ribosomal subunit protein bS6 (92 aa).

Belongs to the bacterial ribosomal protein bS6 family.

Functionally, binds together with bS18 to 16S ribosomal RNA. The chain is Small ribosomal subunit protein bS6 from Clostridioides difficile (strain 630) (Peptoclostridium difficile).